The following is a 283-amino-acid chain: Syntaxin VAM3 (283 aa).

The tract at residues 1–26 is disordered; the sequence is MSFFDIEAQSSKGNSQQEPQFSTNQK. Over 1 to 261 the chain is Cytoplasmic; sequence MSFFDIEAQS…ADQHQRDRNK (261 aa). A compositionally biased stretch (polar residues) spans 8 to 25; sequence AQSSKGNSQQEPQFSTNQ. Coiled coils occupy residues 28 to 48 and 84 to 111; these read KELS…EKEC and LIHQ…SYNQ. Disordered stretches follow at residues 116-146 and 162-182; these read FPLK…DPES and NEGQ…QGLS. Residues 127 to 144 show a composition bias toward basic and acidic residues; sequence SKERKDIHPRTEAVRQDP. Positions 169–189 form a coiled coil; it reads QLQEEQEQQQQGLSQEELDFQ. Residues 190–252 enclose the t-SNARE coiled-coil homology domain; sequence TIIHQERSQQ…QNANKQLTRA (63 aa). The chain crosses the membrane as a helical; Anchor for type IV membrane protein span at residues 262–282; it reads CGKVTLIIIIVVCMVVLLAVL. A topological domain (vacuolar) is located at residue S283.

It belongs to the syntaxin family. Associates with VAM7.

The protein localises to the vacuole membrane. Functionally, required for vacuolar assembly. Provides the t-SNARE function in a late step of the vacuolar assembly. Required for homotypic vacuole membrane fusion, autophagy and fusion of biosynthetic transport vesicles with the vacuole. Required for the delivery of alpha-factor receptor-ligand complexes to the vacuole. This chain is Syntaxin VAM3 (VAM3), found in Saccharomyces cerevisiae (strain ATCC 204508 / S288c) (Baker's yeast).